We begin with the raw amino-acid sequence, 1261 residues long: ABC-type transmembrane transporter verA (1261 aa).

The helical transmembrane segment at 41-61 (IGCAFAAVCSGAAMPLMALIL) threads the bilayer. In terms of domain architecture, ABC transmembrane type-1 1 spans 41–334 (IGCAFAAVCS…LGPNMPSFIK (294 aa)). N-linked (GlcNAc...) asparagine glycosylation occurs at Asn67. 5 helical membrane passes run 92–112 (LWFV…SFGF), 166–186 (LGIM…AFSQ), 190–210 (LTLV…FIVS), 270–290 (FVGL…AIGF), and 308–328 (ILSV…LGPN). The region spanning 374 to 618 (VELRDMSFAY…GGLYKRLYDA (245 aa)) is the ABC transporter 1 domain. A glycan (N-linked (GlcNAc...) asparagine) is linked at Asn396. 409 to 416 (GPSGAGKS) serves as a coordination point for ATP. The N-linked (GlcNAc...) asparagine glycan is linked to Asn463. The next 6 membrane-spanning stretches (helical) occupy residues 686–706 (YWPI…IFPV), 734–754 (LMFF…GFFM), 808–828 (MGLL…GLAY), 830–850 (WKFA…AGYL), 913–933 (VMTL…ALGF), and 950–970 (FFTV…LFGF). The region spanning 691–976 (LIGLVACVVT…LFGFSSNLGK (286 aa)) is the ABC transmembrane type-1 2 domain. Residues Asn1007 and Asn1021 are each glycosylated (N-linked (GlcNAc...) asparagine). In terms of domain architecture, ABC transporter 2 spans 1017 to 1255 (VDMQNVTFAY…QGNYFKMHES (239 aa)). 1052 to 1059 (GTSGSGKS) is a binding site for ATP. N-linked (GlcNAc...) asparagine glycosylation occurs at Asn1106.

Belongs to the ABC transporter superfamily. ABCB family. Multidrug resistance exporter (TC 3.A.1.201) subfamily.

The protein resides in the cell membrane. Functionally, ABC-type transmembrane transporter; part of the gene cluster that mediates the biosynthesis of 11'-deoxyverticillin A, one of the dimeric epipolythiodioxopiperazines (ETPs) from the verticillin family that are toxic secondary metabolites. The verA multidrug transporter is probably involved in the secretion of 11'-deoxyverticillin A. The polypeptide is ABC-type transmembrane transporter verA (Clonostachys rogersoniana).